The primary structure comprises 622 residues: Palmitoyltransferase ZDHHC13 (622 aa).

At Met-1 the chain carries N-acetylmethionine. Residues Met-1–Glu-291 are Cytoplasmic-facing. 7 ANK repeats span residues Pro-43 to Pro-78, Glu-81 to Gln-110, Leu-115 to Leu-144, Glu-148 to Met-177, Asn-181 to Val-211, His-216 to Ile-245, and Lys-249 to Ala-277. Residues Leu-292–Phe-312 form a helical membrane-spanning segment. The Lumenal segment spans residues Asn-313–Lys-320. A helical membrane pass occupies residues Gly-321–Tyr-341. Over Lys-342–Leu-347 the chain is Cytoplasmic. A helical transmembrane segment spans residues Pro-348–Phe-368. Residues Pro-369 to Thr-371 lie on the Lumenal side of the membrane. The helical transmembrane segment at Ala-372–Tyr-392 threads the bilayer. The Cytoplasmic segment spans residues Lys-393 to His-470. Residues Thr-426–Leu-476 form the DHHC domain. The active-site S-palmitoyl cysteine intermediate is Cys-456. A helical transmembrane segment spans residues Tyr-471–Val-491. The Lumenal segment spans residues Tyr-492 to Pro-518. Residues Trp-519–Ile-539 traverse the membrane as a helical segment. Over Asn-540–Val-622 the chain is Cytoplasmic.

This sequence belongs to the DHHC palmitoyltransferase family. AKR/ZDHHC17 subfamily. As to quaternary structure, interacts (via ANK repeats) with CLIP3. Interacts (via ANK repeats) with DNAJC5 (via C-terminus). Interacts (via ANK repeats) with HTT. Interacts (via ANK repeats) with MAP6. Interacts (via ANK repeats) with SNAP23. Interacts (via ANK repeats) with SNAP25. May interact (via ANK repeats) with SPRED2. Expressed in most adult tissues, but at low levels in the liver, skin, and lung.

The protein localises to the golgi apparatus membrane. Its subcellular location is the cytoplasmic vesicle membrane. It carries out the reaction L-cysteinyl-[protein] + hexadecanoyl-CoA = S-hexadecanoyl-L-cysteinyl-[protein] + CoA. Its function is as follows. Palmitoyltransferase that could catalyze the addition of palmitate onto various protein substrates. Palmitoyltransferase for HTT and GAD2. May play a role in Mg(2+) transport. This chain is Palmitoyltransferase ZDHHC13, found in Mus musculus (Mouse).